The following is a 253-amino-acid chain: Imidazole glycerol phosphate synthase subunit HisF (253 aa).

Catalysis depends on residues Asp11 and Asp130.

Belongs to the HisA/HisF family. In terms of assembly, heterodimer of HisH and HisF.

Its subcellular location is the cytoplasm. The enzyme catalyses 5-[(5-phospho-1-deoxy-D-ribulos-1-ylimino)methylamino]-1-(5-phospho-beta-D-ribosyl)imidazole-4-carboxamide + L-glutamine = D-erythro-1-(imidazol-4-yl)glycerol 3-phosphate + 5-amino-1-(5-phospho-beta-D-ribosyl)imidazole-4-carboxamide + L-glutamate + H(+). It participates in amino-acid biosynthesis; L-histidine biosynthesis; L-histidine from 5-phospho-alpha-D-ribose 1-diphosphate: step 5/9. IGPS catalyzes the conversion of PRFAR and glutamine to IGP, AICAR and glutamate. The HisF subunit catalyzes the cyclization activity that produces IGP and AICAR from PRFAR using the ammonia provided by the HisH subunit. The chain is Imidazole glycerol phosphate synthase subunit HisF from Thermotoga sp. (strain RQ2).